We begin with the raw amino-acid sequence, 404 residues long: L-cysteine:1D-myo-inositol 2-amino-2-deoxy-alpha-D-glucopyranoside ligase 1 (404 aa).

Cysteine 47 contributes to the Zn(2+) binding site. L-cysteinyl-5'-AMP is bound by residues 47–50 (CGIT), threonine 62, and 85–87 (NIT). Positions 49-59 (ITPYDSTHLGH) match the 'HIGH' region motif. The 'ERGGDP' region motif lies at 188–193 (ERGGDP). Residue tryptophan 228 coordinates L-cysteinyl-5'-AMP. Cysteine 232 contributes to the Zn(2+) binding site. An L-cysteinyl-5'-AMP-binding site is contributed by 250–252 (GSD). Histidine 257 lines the Zn(2+) pocket. L-cysteinyl-5'-AMP is bound at residue isoleucine 284. Positions 290–294 (KMSKS) match the 'KMSKS' region motif.

It belongs to the class-I aminoacyl-tRNA synthetase family. MshC subfamily. Monomer. The cofactor is Zn(2+).

The enzyme catalyses 1D-myo-inositol 2-amino-2-deoxy-alpha-D-glucopyranoside + L-cysteine + ATP = 1D-myo-inositol 2-(L-cysteinylamino)-2-deoxy-alpha-D-glucopyranoside + AMP + diphosphate + H(+). Catalyzes the ATP-dependent condensation of GlcN-Ins and L-cysteine to form L-Cys-GlcN-Ins. The polypeptide is L-cysteine:1D-myo-inositol 2-amino-2-deoxy-alpha-D-glucopyranoside ligase 1 (Corynebacterium urealyticum (strain ATCC 43042 / DSM 7109)).